A 96-amino-acid chain; its full sequence is MAKYEILYIIRPNIEEEAKNALVARFDSILTDNGATVVESKDWEKRRLAYEIQDFREGLYHIVNVEANDDVALKEFDRLSKINADILRHMIVKLDA.

The protein belongs to the bacterial ribosomal protein bS6 family.

Its function is as follows. Binds together with bS18 to 16S ribosomal RNA. The chain is Small ribosomal subunit protein bS6 from Streptococcus gordonii (strain Challis / ATCC 35105 / BCRC 15272 / CH1 / DL1 / V288).